The following is a 405-amino-acid chain: MRILTFTGKGGVGKTSVSAATAVRLSEMGHRTLVLSTDPAHSLSDSFNLQLGAEPTKIKENLHAIEVNPYVDLKENWHSVQKYYTRVFMAQGVSGVMADEMTILPGMEELFSLLRIKRYKSTGLYDALVLDTAPTGETLRLLSLPDTLSWGMKAVKNVNKYIVRPLSKPLSKMSDKIAYYIPPEDAIESVDQVFDELEDIRDILTDNVKSTVRLVMNAEKMSIKETMRALTYLNLYGFKVDMVLVNKLLDAQENSGYLEKWKGIQQKYLGEIEEGFSPLPVKKLKMYDQEIVGVKSLEVFAHDIYGDTDPSDMMYDEPPIKFVRKGDIYEVQLKLMFANPVDIDVWVTGDELFVQIGNQRKIITLPVSLTGLEPGDAVFRDKWLHIPFDLEKQGQHHRTREFNKA.

8–15 (GKGGVGKT) serves as a coordination point for ATP.

It belongs to the arsA ATPase family.

The catalysed reaction is arsenite(in) + ATP + H2O = arsenite(out) + ADP + phosphate + H(+). In terms of biological role, anion-transporting ATPase. Catalyzes the extrusion of arsenite. This is Putative arsenical pump-driving ATPase from Prosthecochloris vibrioformis (Chlorobium vibrioforme).